The sequence spans 399 residues: Imidazolonepropionase (399 aa).

Positions 68 and 70 each coordinate Fe(3+). Residues H68 and H70 each coordinate Zn(2+). 3 residues coordinate 4-imidazolone-5-propanoate: R77, Y140, and H173. Y140 contacts N-formimidoyl-L-glutamate. H238 lines the Fe(3+) pocket. H238 contacts Zn(2+). Q241 contacts 4-imidazolone-5-propanoate. D313 provides a ligand contact to Fe(3+). D313 is a binding site for Zn(2+). The N-formimidoyl-L-glutamate site is built by N315 and G317. T318 lines the 4-imidazolone-5-propanoate pocket.

Belongs to the metallo-dependent hydrolases superfamily. HutI family. It depends on Zn(2+) as a cofactor. Fe(3+) is required as a cofactor.

The protein resides in the cytoplasm. It carries out the reaction 4-imidazolone-5-propanoate + H2O = N-formimidoyl-L-glutamate. It participates in amino-acid degradation; L-histidine degradation into L-glutamate; N-formimidoyl-L-glutamate from L-histidine: step 3/3. Functionally, catalyzes the hydrolytic cleavage of the carbon-nitrogen bond in imidazolone-5-propanoate to yield N-formimidoyl-L-glutamate. It is the third step in the universal histidine degradation pathway. This is Imidazolonepropionase from Rhizorhabdus wittichii (strain DSM 6014 / CCUG 31198 / JCM 15750 / NBRC 105917 / EY 4224 / RW1) (Sphingomonas wittichii).